A 460-amino-acid polypeptide reads, in one-letter code: tRNA modification GTPase MnmE (460 aa).

Positions 29, 91, and 132 each coordinate (6S)-5-formyl-5,6,7,8-tetrahydrofolate. The 157-residue stretch at 227–383 (GISIALIGKT…LIDTIIKKCG (157 aa)) folds into the TrmE-type G domain. Asn237 is a K(+) binding site. GTP is bound by residues 237–242 (NVGKSS), 256–262 (TNIPGTT), and 281–284 (DTAG). Ser241 is a Mg(2+) binding site. K(+) is bound by residues Thr256, Ile258, and Thr261. Mg(2+) is bound at residue Thr262. Lys460 contacts (6S)-5-formyl-5,6,7,8-tetrahydrofolate.

This sequence belongs to the TRAFAC class TrmE-Era-EngA-EngB-Septin-like GTPase superfamily. TrmE GTPase family. In terms of assembly, homodimer. Heterotetramer of two MnmE and two MnmG subunits. It depends on K(+) as a cofactor.

Its subcellular location is the cytoplasm. Exhibits a very high intrinsic GTPase hydrolysis rate. Involved in the addition of a carboxymethylaminomethyl (cmnm) group at the wobble position (U34) of certain tRNAs, forming tRNA-cmnm(5)s(2)U34. This is tRNA modification GTPase MnmE from Prochlorococcus marinus (strain MIT 9215).